Here is a 549-residue protein sequence, read N- to C-terminus: Glucose-6-phosphate isomerase (549 aa).

Catalysis depends on glutamate 355, which acts as the Proton donor. Active-site residues include histidine 387 and lysine 515.

This sequence belongs to the GPI family.

The protein resides in the cytoplasm. The enzyme catalyses alpha-D-glucose 6-phosphate = beta-D-fructose 6-phosphate. Its pathway is carbohydrate biosynthesis; gluconeogenesis. The protein operates within carbohydrate degradation; glycolysis; D-glyceraldehyde 3-phosphate and glycerone phosphate from D-glucose: step 2/4. Catalyzes the reversible isomerization of glucose-6-phosphate to fructose-6-phosphate. In Mannheimia succiniciproducens (strain KCTC 0769BP / MBEL55E), this protein is Glucose-6-phosphate isomerase.